Reading from the N-terminus, the 122-residue chain is Small ribosomal subunit protein uS13 (122 aa).

The disordered stretch occupies residues 99-122 (RGQRTHTNARTRKGPAKAIAGKKK).

Belongs to the universal ribosomal protein uS13 family. In terms of assembly, part of the 30S ribosomal subunit. Forms a loose heterodimer with protein S19. Forms two bridges to the 50S subunit in the 70S ribosome.

Located at the top of the head of the 30S subunit, it contacts several helices of the 16S rRNA. In the 70S ribosome it contacts the 23S rRNA (bridge B1a) and protein L5 of the 50S subunit (bridge B1b), connecting the 2 subunits; these bridges are implicated in subunit movement. Contacts the tRNAs in the A and P-sites. The protein is Small ribosomal subunit protein uS13 of Rhizobium leguminosarum bv. trifolii (strain WSM2304).